The chain runs to 438 residues: UDP-N-acetylmuramoylalanine--D-glutamate ligase (438 aa).

An ATP-binding site is contributed by 112-118 (GSNGKST).

Belongs to the MurCDEF family.

It localises to the cytoplasm. It catalyses the reaction UDP-N-acetyl-alpha-D-muramoyl-L-alanine + D-glutamate + ATP = UDP-N-acetyl-alpha-D-muramoyl-L-alanyl-D-glutamate + ADP + phosphate + H(+). The protein operates within cell wall biogenesis; peptidoglycan biosynthesis. In terms of biological role, cell wall formation. Catalyzes the addition of glutamate to the nucleotide precursor UDP-N-acetylmuramoyl-L-alanine (UMA). This Salmonella typhi protein is UDP-N-acetylmuramoylalanine--D-glutamate ligase.